Consider the following 60-residue polypeptide: Large ribosomal subunit protein bL32 (60 aa).

Disordered stretches follow at residues 1-28 and 41-60; these read MAVQ…PGIA and HISP…KSEA. The span at 9 to 19 shows a compositional bias: basic residues; the sequence is SPSKRGMHRSH.

It belongs to the bacterial ribosomal protein bL32 family.

The polypeptide is Large ribosomal subunit protein bL32 (Verminephrobacter eiseniae (strain EF01-2)).